The chain runs to 524 residues: Phosphoenolpyruvate carboxykinase (ATP) (524 aa).

Substrate-binding residues include R52, Y188, and K194. ATP-binding positions include K194, H213, and 229–237 (GLSGTGKTT). Mn(2+) is bound by residues K194 and H213. Residue D250 participates in Mn(2+) binding. ATP is bound by residues E278, R314, and T439. R314 is a substrate binding site.

It belongs to the phosphoenolpyruvate carboxykinase (ATP) family. Mn(2+) is required as a cofactor.

The protein resides in the cytoplasm. It catalyses the reaction oxaloacetate + ATP = phosphoenolpyruvate + ADP + CO2. It participates in carbohydrate biosynthesis; gluconeogenesis. In terms of biological role, involved in the gluconeogenesis. Catalyzes the conversion of oxaloacetate (OAA) to phosphoenolpyruvate (PEP) through direct phosphoryl transfer between the nucleoside triphosphate and OAA. In Campylobacter jejuni subsp. doylei (strain ATCC BAA-1458 / RM4099 / 269.97), this protein is Phosphoenolpyruvate carboxykinase (ATP).